The chain runs to 185 residues: Threonylcarbamoyl-AMP synthase (185 aa).

The region spanning S4–A185 is the YrdC-like domain.

This sequence belongs to the SUA5 family. TsaC subfamily.

The protein localises to the cytoplasm. The catalysed reaction is L-threonine + hydrogencarbonate + ATP = L-threonylcarbamoyladenylate + diphosphate + H2O. Functionally, required for the formation of a threonylcarbamoyl group on adenosine at position 37 (t(6)A37) in tRNAs that read codons beginning with adenine. Catalyzes the conversion of L-threonine, HCO(3)(-)/CO(2) and ATP to give threonylcarbamoyl-AMP (TC-AMP) as the acyladenylate intermediate, with the release of diphosphate. The protein is Threonylcarbamoyl-AMP synthase of Pseudomonas paraeruginosa (strain DSM 24068 / PA7) (Pseudomonas aeruginosa (strain PA7)).